The following is a 249-amino-acid chain: NADH-quinone oxidoreductase subunit C (249 aa).

Positions 1–29 (MTENQTTPDPGEPGSSADRPGGLVPTGDS) are disordered.

This sequence belongs to the complex I 30 kDa subunit family. In terms of assembly, NDH-1 is composed of 14 different subunits. Subunits NuoB, C, D, E, F, and G constitute the peripheral sector of the complex.

It is found in the cell membrane. The catalysed reaction is a quinone + NADH + 5 H(+)(in) = a quinol + NAD(+) + 4 H(+)(out). Functionally, NDH-1 shuttles electrons from NADH, via FMN and iron-sulfur (Fe-S) centers, to quinones in the respiratory chain. The immediate electron acceptor for the enzyme in this species is believed to be a menaquinone. Couples the redox reaction to proton translocation (for every two electrons transferred, four hydrogen ions are translocated across the cytoplasmic membrane), and thus conserves the redox energy in a proton gradient. This Saccharopolyspora erythraea (strain ATCC 11635 / DSM 40517 / JCM 4748 / NBRC 13426 / NCIMB 8594 / NRRL 2338) protein is NADH-quinone oxidoreductase subunit C.